Here is a 64-residue protein sequence, read N- to C-terminus: Micrurotoxin 2 (64 aa).

Disulfide bonds link cysteine 3–cysteine 24, cysteine 6–cysteine 11, cysteine 17–cysteine 41, cysteine 45–cysteine 57, and cysteine 58–cysteine 63.

This sequence belongs to the three-finger toxin family. Ancestral subfamily. In terms of tissue distribution, expressed by the venom gland.

The protein resides in the secreted. In terms of biological role, allosteric modulator of the GABA(A) receptor (GABR), possibly increasing receptor affinity for the agonist, thus enhancing receptor opening and macroscopic desensitization. In vivo, intracerebroventricular injection into mice results in periods of reduced basal activity, followed by bursts of intense seizures and death. The protein is Micrurotoxin 2 of Micrurus mipartitus (Red-tailed coral snake).